We begin with the raw amino-acid sequence, 207 residues long: dTTP/UTP pyrophosphatase (207 aa).

Residue D79 is the Proton acceptor of the active site.

It belongs to the Maf family. YhdE subfamily. A divalent metal cation is required as a cofactor.

It localises to the cytoplasm. It catalyses the reaction dTTP + H2O = dTMP + diphosphate + H(+). The catalysed reaction is UTP + H2O = UMP + diphosphate + H(+). In terms of biological role, nucleoside triphosphate pyrophosphatase that hydrolyzes dTTP and UTP. May have a dual role in cell division arrest and in preventing the incorporation of modified nucleotides into cellular nucleic acids. The polypeptide is dTTP/UTP pyrophosphatase (Rhodopseudomonas palustris (strain HaA2)).